A 150-amino-acid chain; its full sequence is MAKLILTHEVTGLGAAGDVVEVKDGYARNFLLPRGFALTWSKGGEKQVESIKAARVAREHASLEDAQKQAAALSAKPVKLVVKAGETGRLFGTVKQGDVADAVEAAGLGRIDKRKVELPAHIKSVGSYQANVRLHDDVAAVIELDVVAGK.

It belongs to the bacterial ribosomal protein bL9 family.

Binds to the 23S rRNA. The chain is Large ribosomal subunit protein bL9 from Arthrobacter sp. (strain FB24).